A 392-amino-acid polypeptide reads, in one-letter code: 2-oxoisovalerate dehydrogenase subunit beta, mitochondrial (392 aa).

Residues 1–50 (MAVVAAAAGWLLRLRAAGAEGHWRRLPGAGLARGFLHPAATVEDAAQRRQ) constitute a mitochondrion transit peptide. Tyrosine 152 contacts thiamine diphosphate. K(+) is bound by residues glycine 178, leucine 180, threonine 181, cysteine 228, and aspartate 231. Position 232 is an N6-acetyllysine (lysine 232). Residue asparagine 233 participates in K(+) binding. Residue lysine 241 is modified to N6-acetyllysine.

In terms of assembly, heterotetramer of 2 alpha/BCKDHA and 2 beta chains/BCKDHB that forms the branched-chain alpha-keto acid decarboxylase (E1) component of the BCKD complex. The branched-chain alpha-ketoacid dehydrogenase is a large complex composed of three major building blocks E1, E2 and E3. It is organized around E2, a 24-meric cubic core composed of DBT, to which are associated 6 to 12 copies of E1, and approximately 6 copies of the dehydrogenase E3, a DLD dimer. It depends on thiamine diphosphate as a cofactor.

The protein localises to the mitochondrion matrix. It carries out the reaction N(6)-[(R)-lipoyl]-L-lysyl-[protein] + 3-methyl-2-oxobutanoate + H(+) = N(6)-[(R)-S(8)-2-methylpropanoyldihydrolipoyl]-L-lysyl-[protein] + CO2. Its function is as follows. Together with BCKDHA forms the heterotetrameric E1 subunit of the mitochondrial branched-chain alpha-ketoacid dehydrogenase (BCKD) complex. The BCKD complex catalyzes the multi-step oxidative decarboxylation of alpha-ketoacids derived from the branched-chain amino-acids valine, leucine and isoleucine producing CO2 and acyl-CoA which is subsequently utilized to produce energy. The E1 subunit catalyzes the first step with the decarboxylation of the alpha-ketoacid forming an enzyme-product intermediate. A reductive acylation mediated by the lipoylamide cofactor of E2 extracts the acyl group from the E1 active site for the next step of the reaction. The polypeptide is 2-oxoisovalerate dehydrogenase subunit beta, mitochondrial (Homo sapiens (Human)).